The chain runs to 730 residues: Actin filament-associated protein 1 (730 aa).

Methionine 1 is modified (N-acetylmethionine). The segment at 47–91 (KDHAQKQETANSLPAPPQMPLPEIPQPWLPPDSGPPPLPTSSLPE) is disordered. Over residues 60–85 (PAPPQMPLPEIPQPWLPPDSGPPPLP) the composition is skewed to pro residues. The SH3-binding motif lies at 71-74 (PQPW). The SH2-binding 1 motif lies at 94 to 97 (YEEA). Positions 119–140 (SSSYESYDEEEEDGKGKKTRHQ) are disordered. The PH 1 domain maps to 153 to 249 (DAKICAFLLR…WLKVIKEAYS (97 aa)). Residues 252–292 (SGPVDSECPPPPSSPVHKAELEKKLSSERPSSDGEGVVENG) form a disordered region. Residues 268-283 (HKAELEKKLSSERPSS) are compositionally biased toward basic and acidic residues. 2 positions are modified to phosphoserine: serine 282 and serine 283. A PH 2 domain is found at 347–441 (DVPTCGYLNV…WIGILLAETG (95 aa)). The short motif at 451 to 456 (YDYIDV) is the SH2-binding 2 element. The interval 512–537 (KGKKPPVASNGVTGKGKTLSSQPKKA) is disordered. Position 548 is a phosphoserine (serine 548). Residues 557–648 (KNRVEADAKR…VKESLKKALA (92 aa)) adopt a coiled-coil conformation. Residues 594–637 (DLRAAIEVNAGRKPQAILEEKLKQLEEECRQKEAERVSLELELT) form an interaction with F-actin region. Residues serine 664, serine 665, and serine 668 each carry the phosphoserine modification. A Phosphothreonine modification is found at threonine 675. Phosphoserine is present on residues serine 679 and serine 687.

In terms of assembly, monomer and homomultimer. Interacts via its C-terminus with F-actin; probably involving AFAP1 multimers. Interacts with activated SRC SH3-SH2 domains. Interacts via its PH 1 domain with PRKCA, PRKCB and PRKCI. Phosphorylated on tyrosine residues by SRC. As to expression, low expression in normal breast epithelial cell line MCF-10A and in tumorigenic breast cancer cell lines MCF-7, T-47D and ZR-75-1. Highly expressed in the invasive breast cancer cell lines MDA-MB-231 and MDA-MB-435. Overexpressed in prostate carcinoma.

It is found in the cytoplasm. The protein localises to the cytoskeleton. Its subcellular location is the stress fiber. Functionally, can cross-link actin filaments into both network and bundle structures. May modulate changes in actin filament integrity and induce lamellipodia formation. May function as an adapter molecule that links other proteins, such as SRC and PKC to the actin cytoskeleton. Seems to play a role in the development and progression of prostate adenocarcinoma by regulating cell-matrix adhesions and migration in the cancer cells. The sequence is that of Actin filament-associated protein 1 (AFAP1) from Homo sapiens (Human).